Reading from the N-terminus, the 287-residue chain is ATP synthase gamma chain (287 aa).

It belongs to the ATPase gamma chain family. In terms of assembly, F-type ATPases have 2 components, CF(1) - the catalytic core - and CF(0) - the membrane proton channel. CF(1) has five subunits: alpha(3), beta(3), gamma(1), delta(1), epsilon(1). CF(0) has three main subunits: a, b and c.

The protein localises to the cell inner membrane. Produces ATP from ADP in the presence of a proton gradient across the membrane. The gamma chain is believed to be important in regulating ATPase activity and the flow of protons through the CF(0) complex. The sequence is that of ATP synthase gamma chain from Shigella sonnei (strain Ss046).